The following is a 173-amino-acid chain: dCTP deaminase, dUMP-forming (173 aa).

Residues 93 to 98, aspartate 111, 119 to 121, glutamine 138, and tyrosine 151 contribute to the dCTP site; these read RSSTGR and TLE. Residue glutamate 121 is the Proton donor/acceptor of the active site.

It belongs to the dCTP deaminase family. In terms of assembly, homotrimer.

The catalysed reaction is dCTP + 2 H2O = dUMP + NH4(+) + diphosphate. The protein operates within pyrimidine metabolism; dUMP biosynthesis; dUMP from dCTP: step 1/1. In terms of biological role, bifunctional enzyme that catalyzes both the deamination of dCTP to dUTP and the hydrolysis of dUTP to dUMP without releasing the toxic dUTP intermediate. This is dCTP deaminase, dUMP-forming from Clostridium beijerinckii (strain ATCC 51743 / NCIMB 8052) (Clostridium acetobutylicum).